We begin with the raw amino-acid sequence, 512 residues long: Mannose-1-phosphate guanylyltransferase (512 aa).

The protein belongs to the mannose-6-phosphate isomerase type 2 family.

It catalyses the reaction alpha-D-mannose 1-phosphate + GTP + H(+) = GDP-alpha-D-mannose + diphosphate. This Sinorhizobium fredii (strain NBRC 101917 / NGR234) protein is Mannose-1-phosphate guanylyltransferase (noeJ).